A 181-amino-acid polypeptide reads, in one-letter code: Small ribosomal subunit protein uS4 (181 aa).

In terms of domain architecture, S4 RNA-binding spans 104–172 (RRLQTIVYKK…SRPPVMSQQE (69 aa)).

It belongs to the universal ribosomal protein uS4 family. In terms of assembly, part of the 30S ribosomal subunit. Contacts protein S5. The interaction surface between S4 and S5 is involved in control of translational fidelity.

One of the primary rRNA binding proteins, it binds directly to 16S rRNA where it nucleates assembly of the body of the 30S subunit. In terms of biological role, with S5 and S12 plays an important role in translational accuracy. The chain is Small ribosomal subunit protein uS4 from Saccharolobus solfataricus (strain ATCC 35092 / DSM 1617 / JCM 11322 / P2) (Sulfolobus solfataricus).